A 487-amino-acid polypeptide reads, in one-letter code: GTPase Der (487 aa).

EngA-type G domains follow at residues 3-166 (PVIA…PRDA) and 193-366 (IKIA…KSAV). GTP is bound by residues 9 to 16 (GRPNVGKS), 56 to 60 (DTGGI), 118 to 121 (NKID), 199 to 206 (GRPNVGKS), 246 to 250 (DTAGV), and 311 to 314 (NKWD). Residues 367 to 451 (TRWPTSRLTQ…PIRIEYKGGE (85 aa)) enclose the KH-like domain. Over residues 449-461 (GGENPFEGKKNTL) the composition is skewed to basic and acidic residues. The segment at 449–487 (GGENPFEGKKNTLTDRQVNKKRRLMSHHKKAEKKRRDKR) is disordered. Basic residues predominate over residues 467-487 (NKKRRLMSHHKKAEKKRRDKR).

It belongs to the TRAFAC class TrmE-Era-EngA-EngB-Septin-like GTPase superfamily. EngA (Der) GTPase family. As to quaternary structure, associates with the 50S ribosomal subunit.

In terms of biological role, GTPase that plays an essential role in the late steps of ribosome biogenesis. This is GTPase Der from Pseudomonas putida (strain GB-1).